The following is a 64-amino-acid chain: Non-structural protein 3b (64 aa).

The chain is Non-structural protein 3b from Avian infectious bronchitis virus (strain Beaudette) (IBV).